A 242-amino-acid chain; its full sequence is UPF0246 protein SPD_1378 (242 aa).

The protein belongs to the UPF0246 family.

The protein is UPF0246 protein SPD_1378 of Streptococcus pneumoniae serotype 2 (strain D39 / NCTC 7466).